Consider the following 346-residue polypeptide: MDDNNSDWTSYDFGNDTIPSPNEISLSHIGTRHWITLVCYGIVFLLGVPGNALVVWVTGFRMPNSVNAQWFLNLAIADLLCCLSLPILMVPLAQDQHWPFGALACKLFSGIFYMMMYCSVLLLVVISLDRFLLVTKPVWCQNNRQPRQARILCFIIWILGLLGSSPYFAHMEIQHHSETKTVCTGSYSSLGHAWAITIIRSFLFFLLPFLIICISHWKVYHMTSSGRRQRDKSSRTLRVILALVLGFFLCWTPLHIVDLLILVSDQPSERFEVNLNLAHVLTLCLAYINSCLNPLLYVCLGRGFKENLISSLRSVLHFASEAPTHGPSMTTNSKSTTDGVFREKPV.

The Extracellular portion of the chain corresponds to 1–33 (MDDNNSDWTSYDFGNDTIPSPNEISLSHIGTRH). N-linked (GlcNAc...) asparagine glycans are attached at residues Asn-4 and Asn-15. A helical membrane pass occupies residues 34–60 (WITLVCYGIVFLLGVPGNALVVWVTGF). The Cytoplasmic segment spans residues 61–65 (RMPNS). Residues 66 to 89 (VNAQWFLNLAIADLLCCLSLPILM) form a helical membrane-spanning segment. Topologically, residues 90 to 106 (VPLAQDQHWPFGALACK) are extracellular. An intrachain disulfide couples Cys-105 to Cys-183. A helical transmembrane segment spans residues 107–128 (LFSGIFYMMMYCSVLLLVVISL). At 129 to 149 (DRFLLVTKPVWCQNNRQPRQA) the chain is on the cytoplasmic side. Residues 150-170 (RILCFIIWILGLLGSSPYFAH) form a helical membrane-spanning segment. At 171-194 (MEIQHHSETKTVCTGSYSSLGHAW) the chain is on the extracellular side. Residues 195 to 220 (AITIIRSFLFFLLPFLIICISHWKVY) traverse the membrane as a helical segment. Over 221 to 238 (HMTSSGRRQRDKSSRTLR) the chain is Cytoplasmic. The helical transmembrane segment at 239 to 261 (VILALVLGFFLCWTPLHIVDLLI) threads the bilayer. The Extracellular segment spans residues 262-279 (LVSDQPSERFEVNLNLAH). Residues 280 to 300 (VLTLCLAYINSCLNPLLYVCL) traverse the membrane as a helical segment. Residues 301 to 346 (GRGFKENLISSLRSVLHFASEAPTHGPSMTTNSKSTTDGVFREKPV) are Cytoplasmic-facing. The disordered stretch occupies residues 323–346 (PTHGPSMTTNSKSTTDGVFREKPV). Residues 327-338 (PSMTTNSKSTTD) show a composition bias toward polar residues.

Belongs to the G-protein coupled receptor 1 family.

It is found in the cell membrane. Functionally, receptor for the chemotactic and inflammatory peptide anaphylatoxin C5a. This receptor stimulates chemotaxis, granule enzyme release and superoxide anion production. This is C5a anaphylatoxin chemotactic receptor 1 (c5ar1) from Danio rerio (Zebrafish).